Here is a 238-residue protein sequence, read N- to C-terminus: Ribonuclease PH (238 aa).

Phosphate is bound by residues Arg86 and 124–126; that span reads GTR.

It belongs to the RNase PH family. In terms of assembly, homohexameric ring arranged as a trimer of dimers.

The enzyme catalyses tRNA(n+1) + phosphate = tRNA(n) + a ribonucleoside 5'-diphosphate. Its function is as follows. Phosphorolytic 3'-5' exoribonuclease that plays an important role in tRNA 3'-end maturation. Removes nucleotide residues following the 3'-CCA terminus of tRNAs; can also add nucleotides to the ends of RNA molecules by using nucleoside diphosphates as substrates, but this may not be physiologically important. Probably plays a role in initiation of 16S rRNA degradation (leading to ribosome degradation) during starvation. This Rhizorhabdus wittichii (strain DSM 6014 / CCUG 31198 / JCM 15750 / NBRC 105917 / EY 4224 / RW1) (Sphingomonas wittichii) protein is Ribonuclease PH.